Reading from the N-terminus, the 201-residue chain is Large ribosomal subunit protein bL25 (201 aa).

This sequence belongs to the bacterial ribosomal protein bL25 family. CTC subfamily. In terms of assembly, part of the 50S ribosomal subunit; part of the 5S rRNA/L5/L18/L25 subcomplex. Contacts the 5S rRNA. Binds to the 5S rRNA independently of L5 and L18.

Its function is as follows. This is one of the proteins that binds to the 5S RNA in the ribosome where it forms part of the central protuberance. In Chlorobaculum parvum (strain DSM 263 / NCIMB 8327) (Chlorobium vibrioforme subsp. thiosulfatophilum), this protein is Large ribosomal subunit protein bL25.